A 356-amino-acid chain; its full sequence is Hyaluronan and proteoglycan link protein 1 (356 aa).

The propeptide occupies 1-9; the sequence is MRSLLLLVL. The region spanning 40 to 154 is the Ig-like V-type domain; sequence PRLLVEAEQA…EGLEDDTAVV (115 aa). N-linked (GlcNAc...) asparagine glycosylation is present at Asn-58. 5 cysteine pairs are disulfide-bonded: Cys-63/Cys-141, Cys-183/Cys-254, Cys-207/Cys-228, Cys-281/Cys-351, and Cys-306/Cys-327. 2 Link domains span residues 161–256 and 261–353; these read VVFP…FCFT and GRFY…YCFR.

This sequence belongs to the HAPLN family. Ubiquitously expressed.

The protein localises to the secreted. The protein resides in the extracellular space. It localises to the extracellular matrix. Functionally, stabilizes the aggregates of proteoglycan monomers with hyaluronic acid in the extracellular cartilage matrix. This Mus musculus (Mouse) protein is Hyaluronan and proteoglycan link protein 1 (Hapln1).